The primary structure comprises 556 residues: Secreted lipase 4 (556 aa).

A signal peptide spans 1 to 21 (MKLLTNIGTLLALSPVQQVSA). Asn-46, Asn-263, Asn-305, Asn-411, and Asn-453 each carry an N-linked (GlcNAc...) asparagine glycan.

This sequence belongs to the type-B carboxylesterase/lipase family.

The protein resides in the secreted. It carries out the reaction a carboxylic ester + H2O = an alcohol + a carboxylate + H(+). Functionally, secreted lipase involved in plant virulence. Has a substrate preference for p-nitrophenyl esters with a carbon chain length of C12 (p-nitrophenyl laureate). This chain is Secreted lipase 4, found in Gibberella zeae (strain ATCC MYA-4620 / CBS 123657 / FGSC 9075 / NRRL 31084 / PH-1) (Wheat head blight fungus).